A 412-amino-acid polypeptide reads, in one-letter code: Acetylornithine aminotransferase (412 aa).

Residues 109 to 110 (GA) and phenylalanine 142 contribute to the pyridoxal 5'-phosphate site. Arginine 145 contacts N(2)-acetyl-L-ornithine. 233–236 (DEVQ) contacts pyridoxal 5'-phosphate. Lysine 262 carries the post-translational modification N6-(pyridoxal phosphate)lysine. Serine 289 lines the N(2)-acetyl-L-ornithine pocket. A pyridoxal 5'-phosphate-binding site is contributed by threonine 290.

Belongs to the class-III pyridoxal-phosphate-dependent aminotransferase family. ArgD subfamily. As to quaternary structure, homodimer. Pyridoxal 5'-phosphate serves as cofactor.

Its subcellular location is the cytoplasm. It carries out the reaction N(2)-acetyl-L-ornithine + 2-oxoglutarate = N-acetyl-L-glutamate 5-semialdehyde + L-glutamate. Its pathway is amino-acid biosynthesis; L-arginine biosynthesis; N(2)-acetyl-L-ornithine from L-glutamate: step 4/4. In Thermosynechococcus vestitus (strain NIES-2133 / IAM M-273 / BP-1), this protein is Acetylornithine aminotransferase.